Here is a 2108-residue protein sequence, read N- to C-terminus: Mycocerosic acid synthase-like polyketide synthase (2108 aa).

The first 23 residues, Met1–Gly23, serve as a signal peptide directing secretion. The N-palmitoyl cysteine moiety is linked to residue Cys24. The S-diacylglycerol cysteine moiety is linked to residue Cys24. Residues Cys24–Gln436 enclose the Ketosynthase family 3 (KS3) domain. The active-site Acyl-thioester intermediate; for beta-ketoacyl synthase activity is Cys185. Residues His320 and His356 each act as for beta-ketoacyl synthase activity in the active site. Positions Pro438 to Asp542 are linker domain (LD). Residues Arg543–Glu842 are acyltransferase (AT). The active-site Acyl-ester intermediate; for acyltransferase activity is the Ser634. The interval Asn900–Thr1184 is dehydratase (DH). Residues His905–Asp1025 form an N-terminal hotdog fold region. Positions His905–Glu1191 constitute a PKS/mFAS DH domain. The active-site Proton acceptor; for dehydratase activity is the His938. The C-terminal hotdog fold stretch occupies residues Pro1044–Glu1191. Residue Asp1108 is the Proton donor; for dehydratase activity of the active site. A pseudo beta-ketoacyl reductase (PsiKR) region spans residues Ala1220–Asn1391. The interval Ala1419–Val1743 is enoylreductase (ER). The interval Gly1765–Ser2004 is beta-ketoacyl reductase (KR). Residues Leu1773–Leu1776, Ser1796–Gln1799, Asp1824–Ile1825, and Phe1897–Ser1898 contribute to the NADP(+) site. In terms of domain architecture, Carrier spans Glu2025 to Asp2101. The residue at position 2060 (Ser2060) is an O-(pantetheine 4'-phosphoryl)serine.

In terms of assembly, homodimer.

It localises to the cell membrane. It participates in lipid metabolism; fatty acid biosynthesis. Its function is as follows. Polyketide synthase likely involved in the biosynthesis of a polymethyl-branched fatty acid (PMB-FA) that might only be produced during host infection. Is required for the full virulence of M.tuberculosis during host infection. The chain is Mycocerosic acid synthase-like polyketide synthase from Mycobacterium tuberculosis (strain ATCC 25618 / H37Rv).